A 372-amino-acid polypeptide reads, in one-letter code: Tribbles homolog 1 (372 aa).

Disordered regions lie at residues 1–23 (MRVGPVRSAMSGASQPRGPALLF) and 52–86 (ECSSPPDYLSPPGSPCSPQPPPAAPGAGGGSGSAP). The segment covering 59–75 (YLSPPGSPCSPQPPPAA) has biased composition (pro residues). Residues 91–338 (IADYLLLPLA…APEILLHPWF (248 aa)) enclose the Protein kinase domain. Positions 355 to 360 (DQIVPE) match the COP1-binding motif.

It belongs to the protein kinase superfamily. CAMK Ser/Thr protein kinase family. Tribbles subfamily. Monomer. Interacts (via protein kinase domain) with CEBPA. Interacts with COP1. As to expression, expressed in most human tissues with the highest levels in skeletal muscle, thyroid gland, pancreas, peripheral blood leukocytes, and bone marrow.

Its function is as follows. Adapter protein involved in protein degradation by interacting with COP1 ubiquitin ligase. The COP1-binding motif is masked by autoinhibitory interactions with the protein kinase domain. Serves to alter COP1 substrate specificity by directing the activity of COP1 toward CEBPA. Binds selectively the recognition sequence of CEBPA. Regulates myeloid cell differentiation by altering the expression of CEBPA in a COP1-dependent manner. Controls macrophage, eosinophil and neutrophil differentiation via the COP1-binding domain. Interacts with MAPK kinases and regulates activation of MAP kinases, but has no kinase activity. The polypeptide is Tribbles homolog 1 (Homo sapiens (Human)).